Consider the following 507-residue polypeptide: DNA nucleotidylexotransferase (507 aa).

The short motif at 11–17 (PLRKKAK) is the Nuclear localization signal element. Residues 27–124 (QHNVKFKEIV…RPVEIQNRHL (98 aa)) form the BRCT domain. The involved in DNA binding stretch occupies residues 254-258 (VGLKT). A 2'-deoxyribonucleoside 5'-triphosphate contacts are provided by residues 329-334 (GFRRGK) and 338-341 (HDVD). Mg(2+)-binding residues include D339, D341, and D431. 446–447 (GW) serves as a coordination point for a 2'-deoxyribonucleoside 5'-triphosphate.

It belongs to the DNA polymerase type-X family. It depends on Mg(2+) as a cofactor. Found in the thymus and not in the spleen, kidney, intestine, or liver.

The protein resides in the nucleus. It catalyses the reaction DNA(n) + a 2'-deoxyribonucleoside 5'-triphosphate = DNA(n+1) + diphosphate. Template-independent DNA polymerase which catalyzes the random addition of deoxynucleoside 5'-triphosphate to the 3'-end of a DNA initiator. One of the in vivo functions of this enzyme is the addition of nucleotides at the junction (N region) of rearranged Ig heavy chain and T-cell receptor gene segments during the maturation of B- and T-cells. In Xenopus laevis (African clawed frog), this protein is DNA nucleotidylexotransferase (dntt).